The chain runs to 307 residues: MATH domain and coiled-coil domain-containing protein At3g58380 (307 aa).

The 127-residue stretch at 6–132 folds into the MATH domain; sequence DKKFVWVIKD…CREITIVIEV (127 aa). Positions 238-290 form a coiled coil; sequence KVDWLEKKLKEVKEKKKNVDNGKARLQQIEEDLQKLNQKRLDLKDILDKEKAN.

This is MATH domain and coiled-coil domain-containing protein At3g58380 from Arabidopsis thaliana (Mouse-ear cress).